A 148-amino-acid polypeptide reads, in one-letter code: uncharacterized protein (148 aa).

Residues 1–16 form the signal peptide; the sequence is MDVLFIALLVAPLILG. N50 carries N-linked (GlcNAc...) asparagine glycosylation. The disordered stretch occupies residues 91-125; sequence MDPQNPVTTKPVTTEPVTTEPVTTEPQSPNQNDAM. Over residues 96 to 116 the composition is skewed to low complexity; it reads PVTTKPVTTEPVTTEPVTTEP.

Its subcellular location is the secreted. This is an uncharacterized protein from Mus musculus (Mouse).